The chain runs to 382 residues: MASSANALRLGLRTCSRPTQTSNLRIAALQRRALSATATRCEGVPVPKREDDAKLEFTRPYNPGEFLSEKLRSDDLQDWERERYERALTSWEQTPDDLKRGWSTMIRDIEQAAAPLRRVVMPRRSTFWYEEEKDTDLITNEDGEDDFHENDIMSLGHGKLEEHREFREYARIAVWEMPLLSKYAKPFVPPTSEEVLRFRYTTYMGEFHPADRKVVVEFCPKDLRDLSEVQQRKLMKLAGPRYNPEKDIIKMSCEKFEHQAQNKRYLGDLIEKMIAAAKDPKDTFEDIPLDTRHHTFTKKISFPKEWLLTEERKKELEAARQQALLKDAEKVVQGALVDGADVVKQYLESGAAEALHAVPVMAGRGGKALPGGKGGKMQRSKR.

Gly residues predominate over residues 363-375 (GRGGKALPGGKGG). Residues 363 to 382 (GRGGKALPGGKGGKMQRSKR) are disordered.

This sequence belongs to the mitochondrion-specific ribosomal protein mS35 family. In terms of assembly, component of the mitochondrial small ribosomal subunit (mt-SSU). Mature N.crassa 74S mitochondrial ribosomes consist of a small (37S) and a large (54S) subunit. The 37S small subunit contains a 16S ribosomal RNA (16S mt-rRNA) and 32 different proteins. The 54S large subunit contains a 23S rRNA (23S mt-rRNA) and 42 different proteins.

It is found in the mitochondrion. Functionally, component of the mitochondrial ribosome (mitoribosome), a dedicated translation machinery responsible for the synthesis of mitochondrial genome-encoded proteins, including at least some of the essential transmembrane subunits of the mitochondrial respiratory chain. The mitoribosomes are attached to the mitochondrial inner membrane and translation products are cotranslationally integrated into the membrane. The sequence is that of Small ribosomal subunit protein mS35 (rsm24) from Neurospora crassa (strain ATCC 24698 / 74-OR23-1A / CBS 708.71 / DSM 1257 / FGSC 987).